A 656-amino-acid chain; its full sequence is UvrABC system protein C (656 aa).

In terms of domain architecture, GIY-YIG spans 16–95; it reads TDPGVYRFRD…IKEYSPRFNV (80 aa). Residues 208-243 enclose the UVR domain; that stretch reads GRFLRQLEAEMKQAAAAQEYERAARIRDDIQALRTV.

Belongs to the UvrC family. As to quaternary structure, interacts with UvrB in an incision complex.

The protein localises to the cytoplasm. Its function is as follows. The UvrABC repair system catalyzes the recognition and processing of DNA lesions. UvrC both incises the 5' and 3' sides of the lesion. The N-terminal half is responsible for the 3' incision and the C-terminal half is responsible for the 5' incision. In Thermobifida fusca (strain YX), this protein is UvrABC system protein C.